Consider the following 336-residue polypeptide: Fructose-1,6-bisphosphatase class 1 (336 aa).

E90, D112, L114, and D115 together coordinate Mg(2+). Substrate is bound by residues 115–118 (DGSS), N211, and K277. E283 is a binding site for Mg(2+).

The protein belongs to the FBPase class 1 family. Homotetramer. It depends on Mg(2+) as a cofactor.

The protein localises to the cytoplasm. The catalysed reaction is beta-D-fructose 1,6-bisphosphate + H2O = beta-D-fructose 6-phosphate + phosphate. It participates in carbohydrate biosynthesis; gluconeogenesis. This chain is Fructose-1,6-bisphosphatase class 1, found in Stutzerimonas stutzeri (strain A1501) (Pseudomonas stutzeri).